Here is a 34-residue protein sequence, read N- to C-terminus: MSDIN-like toxin proprotein 4 (34 aa).

The propeptide occupies 1-10 (MSDINTARLP). The cyclopeptide (Leu-Pro) cross-link spans 11-20 (LFLPPVRMPP). Positions 21 to 34 (CVGDDIEMVLTRGE) are excised as a propeptide.

This sequence belongs to the MSDIN fungal toxin family. Post-translationally, processed by the macrocyclase-peptidase enzyme POPB to yield a toxic cyclic decapeptide. POPB first removes 10 residues from the N-terminus. Conformational trapping of the remaining peptide forces the enzyme to release this intermediate rather than proceed to macrocyclization. The enzyme rebinds the remaining peptide in a different conformation and catalyzes macrocyclization of the N-terminal 10 residues.

Functionally, probable toxin that belongs to the MSDIN-like toxin family responsible for a large number of food poisoning cases and deaths. This is MSDIN-like toxin proprotein 4 from Amanita bisporigera (Destroying angel).